Consider the following 119-residue polypeptide: MFARISTIITTLFFAMLAAATAVPRTDPPPATGSQCTAVGGDVNCCNSVQDASNPIVGLLAGLLGIVLGPIQGLVGLTCNPISVIGGGNSCSSQTVCCTGNNFSGGLLVIGCSPINIDL.

The N-terminal stretch at 1–22 (MFARISTIITTLFFAMLAAATA) is a signal peptide. Disulfide bonds link cysteine 36/cysteine 97, cysteine 45/cysteine 91, cysteine 46/cysteine 79, and cysteine 98/cysteine 112.

The protein belongs to the fungal hydrophobin family. Self-assembles to form functional amyloid fibrils called rodlets. Self-assembly into fibrillar rodlets occurs spontaneously at hydrophobic:hydrophilic interfaces and the rodlets further associate laterally to form amphipathic monolayers.

It is found in the secreted. It localises to the cell wall. Functionally, aerial growth, conidiation, and dispersal of filamentous fungi in the environment rely upon a capability of their secreting small amphipathic proteins called hydrophobins (HPBs) with low sequence identity. Class I can self-assemble into an outermost layer of rodlet bundles on aerial cell surfaces, conferring cellular hydrophobicity that supports fungal growth, development and dispersal; whereas Class II form highly ordered films at water-air interfaces through intermolecular interactions but contribute nothing to the rodlet structure. Abh2 is a class I hydrophobin involved in the emergence of aerial hyphae and strands. The polypeptide is Class I hydrophobin 2 (Agaricus bisporus (White button mushroom)).